The chain runs to 86 residues: Large ribosomal subunit protein bL31 (86 aa).

A disordered region spans residues 65 to 86 (YGMASSDSSEQKDKSSEEKKES). Residues 73–86 (SEQKDKSSEEKKES) are compositionally biased toward basic and acidic residues.

This sequence belongs to the bacterial ribosomal protein bL31 family. Type A subfamily. Part of the 50S ribosomal subunit.

Binds the 23S rRNA. In Prochlorococcus marinus (strain NATL2A), this protein is Large ribosomal subunit protein bL31.